The sequence spans 58 residues: UPF0434 protein Sfri_2386 (58 aa).

The protein belongs to the UPF0434 family.

The protein is UPF0434 protein Sfri_2386 of Shewanella frigidimarina (strain NCIMB 400).